The sequence spans 101 residues: Small ribosomal subunit protein uS14 (101 aa).

The protein belongs to the universal ribosomal protein uS14 family. Part of the 30S ribosomal subunit. Contacts proteins S3 and S10.

Binds 16S rRNA, required for the assembly of 30S particles and may also be responsible for determining the conformation of the 16S rRNA at the A site. The polypeptide is Small ribosomal subunit protein uS14 (Rhizorhabdus wittichii (strain DSM 6014 / CCUG 31198 / JCM 15750 / NBRC 105917 / EY 4224 / RW1) (Sphingomonas wittichii)).